We begin with the raw amino-acid sequence, 587 residues long: Aspartate--tRNA ligase (587 aa).

Glutamate 174 is an L-aspartate binding site. An aspartate region spans residues 198-201; it reads QITK. Residue arginine 220 participates in L-aspartate binding. Residues 220 to 222 and glutamine 229 contribute to the ATP site; that span reads RDE. An L-aspartate-binding site is contributed by histidine 443. Glutamate 477 contacts ATP. An L-aspartate-binding site is contributed by arginine 484. 529–532 contributes to the ATP binding site; the sequence is GLDR.

The protein belongs to the class-II aminoacyl-tRNA synthetase family. Type 1 subfamily. Homodimer.

It is found in the cytoplasm. The catalysed reaction is tRNA(Asp) + L-aspartate + ATP = L-aspartyl-tRNA(Asp) + AMP + diphosphate. Its function is as follows. Catalyzes the attachment of L-aspartate to tRNA(Asp) in a two-step reaction: L-aspartate is first activated by ATP to form Asp-AMP and then transferred to the acceptor end of tRNA(Asp). This chain is Aspartate--tRNA ligase, found in Streptococcus pneumoniae (strain Hungary19A-6).